We begin with the raw amino-acid sequence, 400 residues long: Ribosomal RNA large subunit methyltransferase I (400 aa).

The 79-residue stretch at 6–84 folds into the PUA domain; it reads FPRLVLAKGR…NEAIDSAFFE (79 aa).

It belongs to the methyltransferase superfamily. RlmI family.

The protein resides in the cytoplasm. It catalyses the reaction cytidine(1962) in 23S rRNA + S-adenosyl-L-methionine = 5-methylcytidine(1962) in 23S rRNA + S-adenosyl-L-homocysteine + H(+). Functionally, specifically methylates the cytosine at position 1962 (m5C1962) of 23S rRNA. The polypeptide is Ribosomal RNA large subunit methyltransferase I (Klebsiella pneumoniae (strain 342)).